The primary structure comprises 58 residues: Small ribosomal subunit protein bS21 (58 aa).

This sequence belongs to the bacterial ribosomal protein bS21 family.

This is Small ribosomal subunit protein bS21 from Lacticaseibacillus paracasei (strain ATCC 334 / BCRC 17002 / CCUG 31169 / CIP 107868 / KCTC 3260 / NRRL B-441) (Lactobacillus paracasei).